Consider the following 330-residue polypeptide: FKBP12-interacting protein of 37 kDa (330 aa).

N-acetylmethionine is present on M1. Acidic residues predominate over residues 1–12 (MEFSSQDDDFGG). Positions 1–43 (MEFSSQDDDFGGDDSAANATRASGNRRSFGDLEDDEDDIFGST) are disordered. Polar residues predominate over residues 17 to 26 (ANATRASGNR). Residues 56 to 308 (SLRGSLKNCK…KGLEIVSELV (253 aa)) adopt a coiled-coil conformation.

It belongs to the fl(2)d family. As to quaternary structure, forms homodimers. Interacts with MTA/EMB1706. Interacts with FKBP12; interaction is inhibited by the immunosuppressive drug FK506. Interacts with VIR. Associates with MTA, MTB, VIR and HAKAI to form the m6A writer complex which is essential for adenosine methylation at specific mRNA sequences. As to expression, ubiquitously expressed with higher levels in primary and lateral roots, leaves, trichomes, and in pollen grains (at protein level).

Its subcellular location is the nucleus speckle. It localises to the nucleus. The protein resides in the nucleoplasm. Probable regulatory subunit of the N6-methyltransferase complex, a multiprotein complex that mediates N6-methyladenosine (m6A) methylation at the 5'-[AG]GAC-3' consensus sites of some mRNAs. Associates with MTA, MTB, VIR and HAKAI to form the m6A writer complex which is essential for adenosine methylation at specific mRNA sequences. N6-methyladenosine (m6A) plays a role in mRNA stability, processing, translation efficiency and editing. Essential protein required during endosperm development and embryogenesis. Involved in endoreduplication, especially in trichomes. May play a role in splicing events. This chain is FKBP12-interacting protein of 37 kDa, found in Arabidopsis thaliana (Mouse-ear cress).